Here is a 503-residue protein sequence, read N- to C-terminus: MMTISLIWGIAVLVSCCIWFIVGIRRRKAGEPPLENGLIPYLGCALKFGSNPLEFLRANQRKHGHVFTCKLMGKYVHFITNSLSYHKVLCHGKYFDWKKFHYTTSAKAFGHRSIDPNDGNTTENINNTFTKTLQGDALCSLSEAMMQNLQSVMRPPGLPKSKSNAWVTEGMYAFCYRVMFEAGYLTLFGRDISKTDTQKALILNNLDNFKQFDQVFPALVAGLPIHLFKTAHKAREKLAEGLKHKNLCVRDQVSELIRLRMFLNDTLSTFDDMEKAKTHLAILWASQANTIPATFWSLFQMIRSPEAMKAASEEVSGALQSAGQELSSGGSAIYLDQVQLNDLPVLDSIIKEALRLSSASLNIRTAKEDFTLHLEDGSYNIRKDDMIALYPQLMHLDPEIYPDPLTFKYDRYLDESGKAKTTFYSNGNKLKCFYMPFGSGATICPGRLFAVQEIKQFLILMLSCFELEFVESQVKCPPLDQSRAGLGILPPLHDIEFKYKLKH.

Residues 4–24 (ISLIWGIAVLVSCCIWFIVGI) form a helical membrane-spanning segment. Cys-444 lines the heme pocket.

Belongs to the cytochrome P450 family. The cofactor is heme. In terms of tissue distribution, detected in liver (at protein level). Liver.

It localises to the endoplasmic reticulum membrane. It is found in the microsome membrane. The catalysed reaction is cholesterol + reduced [NADPH--hemoprotein reductase] + O2 = 7alpha-hydroxycholesterol + oxidized [NADPH--hemoprotein reductase] + H2O + H(+). It catalyses the reaction 4beta-hydroxycholesterol + reduced [NADPH--hemoprotein reductase] + O2 = 4beta,7alpha-dihydroxycholesterol + oxidized [NADPH--hemoprotein reductase] + H2O + H(+). It carries out the reaction lathosterol + reduced [NADPH--hemoprotein reductase] + O2 = 7alpha,8alpha-epoxy-5alpha-cholestan-3beta-ol + oxidized [NADPH--hemoprotein reductase] + H2O + H(+). The enzyme catalyses lathosterol + reduced [NADPH--hemoprotein reductase] + O2 = 5alpha-cholestan-7-oxo-3beta-ol + oxidized [NADPH--hemoprotein reductase] + H2O + H(+). The catalysed reaction is 7-dehydrocholesterol + reduced [NADPH--hemoprotein reductase] + O2 = 7-oxocholesterol + oxidized [NADPH--hemoprotein reductase] + H2O + H(+). It catalyses the reaction (24S)-hydroxycholesterol + reduced [NADPH--hemoprotein reductase] + O2 = (24S)-7alpha-dihydroxycholesterol + oxidized [NADPH--hemoprotein reductase] + H2O + H(+). It carries out the reaction (24R)-hydroxycholesterol + reduced [NADPH--hemoprotein reductase] + O2 = (24R)-7alpha-dihydroxycholesterol + oxidized [NADPH--hemoprotein reductase] + H2O + H(+). Its pathway is lipid metabolism; bile acid biosynthesis. It functions in the pathway steroid metabolism; cholesterol degradation. In terms of biological role, a cytochrome P450 monooxygenase involved in the metabolism of endogenous cholesterol and its oxygenated derivatives (oxysterols). Mechanistically, uses molecular oxygen inserting one oxygen atom into a substrate, and reducing the second into a water molecule, with two electrons provided by NADPH via cytochrome P450 reductase (CPR; NADPH-ferrihemoprotein reductase). Functions as a critical regulatory enzyme of bile acid biosynthesis and cholesterol homeostasis. Catalyzes the hydroxylation of carbon hydrogen bond at 7-alpha position of cholesterol, a rate-limiting step in cholesterol catabolism and bile acid biosynthesis. 7-alpha hydroxylates several oxysterols, including 4beta-hydroxycholesterol and 24-hydroxycholesterol. Catalyzes the oxidation of the 7,8 double bond of 7-dehydrocholesterol and lathosterol with direct and predominant formation of the 7-keto derivatives. The polypeptide is Cytochrome P450 7A1 (Cyp7a1) (Rattus norvegicus (Rat)).